A 389-amino-acid chain; its full sequence is Dual-specificity RNA methyltransferase RlmN (389 aa).

The active-site Proton acceptor is the Glu110. One can recognise a Radical SAM core domain in the interval 116 to 355; that stretch reads EKDRATLCVS…TIVRKTRGDD (240 aa). Cys123 and Cys360 are joined by a disulfide. Residues Cys130, Cys134, and Cys137 each contribute to the [4Fe-4S] cluster site. S-adenosyl-L-methionine-binding positions include 184-185, Ser216, 238-240, and Asn317; these read GE and SLH. Residue Cys360 is the S-methylcysteine intermediate of the active site.

This sequence belongs to the radical SAM superfamily. RlmN family. The cofactor is [4Fe-4S] cluster.

It localises to the cytoplasm. It carries out the reaction adenosine(2503) in 23S rRNA + 2 reduced [2Fe-2S]-[ferredoxin] + 2 S-adenosyl-L-methionine = 2-methyladenosine(2503) in 23S rRNA + 5'-deoxyadenosine + L-methionine + 2 oxidized [2Fe-2S]-[ferredoxin] + S-adenosyl-L-homocysteine. It catalyses the reaction adenosine(37) in tRNA + 2 reduced [2Fe-2S]-[ferredoxin] + 2 S-adenosyl-L-methionine = 2-methyladenosine(37) in tRNA + 5'-deoxyadenosine + L-methionine + 2 oxidized [2Fe-2S]-[ferredoxin] + S-adenosyl-L-homocysteine. Its function is as follows. Specifically methylates position 2 of adenine 2503 in 23S rRNA and position 2 of adenine 37 in tRNAs. m2A2503 modification seems to play a crucial role in the proofreading step occurring at the peptidyl transferase center and thus would serve to optimize ribosomal fidelity. The polypeptide is Dual-specificity RNA methyltransferase RlmN (Erwinia tasmaniensis (strain DSM 17950 / CFBP 7177 / CIP 109463 / NCPPB 4357 / Et1/99)).